A 376-amino-acid polypeptide reads, in one-letter code: uncharacterized protein (376 aa).

Low complexity-rich tracts occupy residues 73-99 and 228-243; these read NNSI…NNNN and SSFS…TVSS. Disordered regions lie at residues 73–100 and 222–269; these read NNSI…NNNL and EQDP…KISD.

This is an uncharacterized protein from Saccharomyces cerevisiae (strain ATCC 204508 / S288c) (Baker's yeast).